Here is a 141-residue protein sequence, read N- to C-terminus: MKKVAIVGALLVLAGCAEVENYNDVVKTPAPAGLEGYWQSKGPQRKLVSPEAIASLVVTKEGDTLDCRQWQRVIALPGKLTMLSDDLTNVTVKRELYEIERDGNTLEYDGMTLQRVARPTPECAAALEKTPLPTPLPTPLP.

The N-terminal stretch at 1–15 is a signal peptide; that stretch reads MKKVAIVGALLVLAG. Cys16 carries N-palmitoyl cysteine lipidation. Cys16 is lipidated: S-diacylglycerol cysteine.

It is found in the cell membrane. This is an uncharacterized protein from Salmonella typhimurium (strain LT2 / SGSC1412 / ATCC 700720).